Reading from the N-terminus, the 471-residue chain is Lincomycin resistance protein LmrB (471 aa).

The next 12 membrane-spanning stretches (helical) occupy residues 13–35 (PIPI…TALN), 55–77 (LTTG…LQWF), 84–106 (FTAV…FAML), 111–133 (VVQA…LIFP), 140–162 (AMGM…SGLI), 167–189 (TWNW…GMKF), 201–223 (IDIL…FSSA), 227–249 (GWGS…LFVW), 269–291 (FTLG…ILLP), 329–351 (AYGP…FFLT), 358–380 (SALT…MMPA), and 445–467 (GIQN…SLFI).

Belongs to the major facilitator superfamily. EmrB family.

Its subcellular location is the cell membrane. Proton-dependent transporter. May mediate the efflux of lincomycin. The chain is Lincomycin resistance protein LmrB (lmrB) from Listeria monocytogenes serovar 1/2a (strain ATCC BAA-679 / EGD-e).